A 712-amino-acid polypeptide reads, in one-letter code: Saccharolysin (712 aa).

Position 73 is a phosphoserine (serine 73). Histidine 501 provides a ligand contact to Zn(2+). Glutamate 502 is a catalytic residue. Residues histidine 505 and histidine 508 each contribute to the Zn(2+) site.

The protein belongs to the peptidase M3 family. It depends on Zn(2+) as a cofactor.

It is found in the cytoplasm. The catalysed reaction is Cleavage of Pro-|-Phe and Ala-|-Ala bonds.. In terms of biological role, could be involved in late stage of protein degradation. This Saccharomyces cerevisiae (strain ATCC 204508 / S288c) (Baker's yeast) protein is Saccharolysin (PRD1).